The following is a 226-amino-acid chain: Thiopurine S-methyltransferase (226 aa).

4 residues coordinate S-adenosyl-L-methionine: W16, M51, E72, and R131.

This sequence belongs to the class I-like SAM-binding methyltransferase superfamily. TPMT family.

It localises to the cytoplasm. The enzyme catalyses S-adenosyl-L-methionine + a thiopurine = S-adenosyl-L-homocysteine + a thiopurine S-methylether.. The polypeptide is Thiopurine S-methyltransferase (Francisella tularensis subsp. tularensis (strain SCHU S4 / Schu 4)).